A 269-amino-acid chain; its full sequence is Putative ABC transporter ATP-binding protein PF0528 (269 aa).

Residues Ile-6–Val-237 enclose the ABC transporter domain. Gly-39–Ser-46 contributes to the ATP binding site.

Belongs to the ABC transporter superfamily.

It localises to the cell membrane. Functionally, probably part of an ABC transporter complex. Responsible for energy coupling to the transport system. In Pyrococcus furiosus (strain ATCC 43587 / DSM 3638 / JCM 8422 / Vc1), this protein is Putative ABC transporter ATP-binding protein PF0528.